A 658-amino-acid chain; its full sequence is Katanin p80 WD40 repeat-containing subunit B1 (658 aa).

Positions 1-284 (MATPVVTKTA…VADLAICNDQ (284 aa)) are interaction with dynein. An interaction with centrosomes region spans residues 1-300 (MATPVVTKTA…SQSNVSSYVV (300 aa)). WD repeat units lie at residues 18–58 (AHAS…CIMS), 61–100 (GHTSPVESVRLNTPEELIVAGSQSGSIRVWDLEAAKILRT), 103–142 (GHKANICSLDFHPYGEFVASGSQDTNIKLWDIRRKGCVFR), 145–184 (GHSQAVRCLRFSPDGKWLASAADDHTVKLWDLTAGKMMSE), 187–226 (GHTGPVNVVEFHPNEYLLASGSSDRTIRFWDLEKFQVVSC), and 229–269 (GEPG…DVVL). Positions 285–437 (LIGVAFSQSN…LPQLPVPNLE (153 aa)) are interaction with PAFAH1B1. Residues 311–329 (VTQDPVQANQPLTQQTPNP) show a composition bias toward polar residues. 2 disordered regions span residues 311–419 (VTQD…EVSK) and 434–458 (PNLEVPARPSVMTSTPAPKGEPDII). The span at 352–374 (HNSESERRSPSSEDDRDERESRA) shows a compositional bias: basic and acidic residues. Residue T395 is modified to Phosphothreonine. Residues 436–658 (LEVPARPSVM…ELHLLMASLD (223 aa)) are interaction with KATNA1 and NDEL1.

The protein belongs to the WD repeat KATNB1 family. As to quaternary structure, interacts with KATNA1. This interaction enhances the microtubule binding and severing activity of KATNA1 and also targets this activity to the centrosome. This interaction is weakly competed by KATNBL1 which has a lower affinity for it. Interacts with ASPM; the katanin complex formation KATNA1:KATNB1 is required for the association of ASPM. Interacts with dynein, microtubules, NDEL1 and PAFAH1B1. Interacts with KATNAL1; this interaction is weakly competed by KATNBL1 which has a lower affinity for it. Interacts with CAMSAP2 and CAMSAP3; leading to regulate the length of CAMSAP-decorated microtubule stretches.

It localises to the cytoplasm. Its subcellular location is the cytoskeleton. The protein localises to the microtubule organizing center. It is found in the centrosome. The protein resides in the spindle pole. It localises to the spindle. Functionally, participates in a complex which severs microtubules in an ATP-dependent manner. May act to target the enzymatic subunit of this complex to sites of action such as the centrosome. Microtubule severing may promote rapid reorganization of cellular microtubule arrays and the release of microtubules from the centrosome following nucleation. Microtubule release from the mitotic spindle poles may allow depolymerization of the microtubule end proximal to the spindle pole, leading to poleward microtubule flux and poleward motion of chromosome. The function in regulating microtubule dynamics at spindle poles seems to depend on the association of the katanin KATNA1:KATNB1 complex with ASPM which recruits it to microtubules. Reversely KATNA1:KATNB1 can enhance ASPM blocking activity on microtubule minus-end growth. Microtubule release within the cell body of neurons may be required for their transport into neuronal processes by microtubule-dependent motor proteins. This transport is required for axonal growth. The polypeptide is Katanin p80 WD40 repeat-containing subunit B1 (Katnb1) (Mus musculus (Mouse)).